Reading from the N-terminus, the 341-residue chain is Ribosomal RNA small subunit methyltransferase H (341 aa).

S-adenosyl-L-methionine is bound by residues 47 to 49, D64, F97, D109, and Q116; that span reads GGY.

Belongs to the methyltransferase superfamily. RsmH family.

It is found in the cytoplasm. The catalysed reaction is cytidine(1402) in 16S rRNA + S-adenosyl-L-methionine = N(4)-methylcytidine(1402) in 16S rRNA + S-adenosyl-L-homocysteine + H(+). Specifically methylates the N4 position of cytidine in position 1402 (C1402) of 16S rRNA. The chain is Ribosomal RNA small subunit methyltransferase H from Allorhizobium ampelinum (strain ATCC BAA-846 / DSM 112012 / S4) (Agrobacterium vitis (strain S4)).